Here is a 423-residue protein sequence, read N- to C-terminus: 5-hydroxytryptamine receptor 1A-alpha (423 aa).

The Extracellular segment spans residues 1-47 (MDLRATSSNDSNATSGYSDTAAVDWDEGENATGSGSLPDPELSYQII). Residues N9, N12, and N30 are each glycosylated (N-linked (GlcNAc...) asparagine). Residues 48 to 68 (TSLFLGALILCSIFGNSCVVA) form a helical membrane-spanning segment. Residues 69-82 (AIALERSLQNVANY) are Cytoplasmic-facing. The helical transmembrane segment at 83 to 107 (LIGSLAVTDLMVSVLVLPMAALYQV) threads the bilayer. The Extracellular segment spans residues 108 to 116 (LNKWTLGQD). Residues 117–141 (ICDLFIALDVLCCTSSILHLCAIAL) traverse the membrane as a helical segment. C118 and C196 are disulfide-bonded. Serotonin contacts are provided by D125 and C129. A DRY motif; important for ligand-induced conformation changes motif is present at residues 142 to 144 (DRY). The Cytoplasmic portion of the chain corresponds to 142 to 161 (DRYWAITDPIDYVNKRTPRR). A helical transmembrane segment spans residues 162 to 183 (AAVLISVTWLIGFSISIPPMLG). Residues 184-202 (WRSAEDRANPDACIISQDP) lie on the Extracellular side of the membrane. The helical transmembrane segment at 203–225 (GYTIYSTFGAFYIPLILMLVLYG) threads the bilayer. Over 226 to 347 (RIFKAARFRI…LARERKTVKT (122 aa)) the chain is Cytoplasmic. The tract at residues 311-332 (LPLPNTPQSSSHENINEKTTGT) is disordered. The span at 316–329 (TPQSSSHENINEKT) shows a compositional bias: polar residues. Positions 320, 346, 347, and 353 each coordinate 1D-myo-inositol 4-phosphate. A helical membrane pass occupies residues 348–371 (LGIIMGTFIFCWLPFFIVALVLPF). Residues 372–379 (CAENCYMP) are Extracellular-facing. The helical transmembrane segment at 380-404 (EWLGAVINWLGYSNSLLNPIIYAYF) threads the bilayer. The NPxxY motif; important for ligand-induced conformation changes and signaling motif lies at 397 to 401 (NPIIY). 1D-myo-inositol 4-phosphate contacts are provided by F404, N405, and K406. The Cytoplasmic portion of the chain corresponds to 405–423 (NKDFQSAFKKILRCKFHRH).

Belongs to the G-protein coupled receptor 1 family. 5-hydroxytryptamine receptor subfamily.

The protein localises to the cell membrane. G-protein coupled receptor activity is regulated by lipids: phosphatidylinositol 4-phosphate increases HTR1A-mediated activity. In terms of biological role, G-protein coupled receptor for 5-hydroxytryptamine (serotonin). Also functions as a receptor for various drugs and psychoactive substances. Ligand binding causes a conformation change that triggers signaling via guanine nucleotide-binding proteins (G proteins) and modulates the activity of downstream effectors, such as adenylate cyclase. HTR1A is coupled to G(i)/G(o) G alpha proteins and mediates inhibitory neurotransmission: signaling inhibits adenylate cyclase activity and activates a phosphatidylinositol-calcium second messenger system that regulates the release of Ca(2+) ions from intracellular stores. Beta-arrestin family members regulate signaling by mediating both receptor desensitization and resensitization processes. This chain is 5-hydroxytryptamine receptor 1A-alpha (htr1aa), found in Takifugu rubripes (Japanese pufferfish).